Reading from the N-terminus, the 222-residue chain is Latexin (222 aa).

Residues 1–97 form the Cystatin LXN-type 1 domain; that stretch reads MEIPPTNYPA…NFTFEGETGK (97 aa). At Lys55 the chain carries N6-acetyllysine. An alpha-helical linker region spans residues 98-117; the sequence is NPDEEDNTFYQRLKSMKEPL. The Cystatin LXN-type 2 domain maps to 118-222; that stretch reads EAQNIPDNFG…SRLPKEVQLE (105 aa).

Belongs to the protease inhibitor I47 (latexin) family. As to expression, highly expressed in heart, prostate, ovary, kidney, pancreas, and colon, moderate or low in other tissues including brain.

The protein resides in the cytoplasm. Hardly reversible, non-competitive, and potent inhibitor of CPA1, CPA2 and CPA4. May play a role in inflammation. The chain is Latexin (LXN) from Homo sapiens (Human).